Reading from the N-terminus, the 157-residue chain is Protein FAM218A (157 aa).

The segment at 104-127 is disordered; it reads PAVTPPKLPGHSKSEGPPGKVRKR.

In Homo sapiens (Human), this protein is Protein FAM218A (FAM218A).